A 108-amino-acid chain; its full sequence is UPF0060 membrane protein YnfA (108 aa).

At 1-5 the chain is on the periplasmic side; that stretch reads MLKTT. Residues 6-26 form a helical membrane-spanning segment; the sequence is LLFFVTALCEIIGCFLPWLWL. Topologically, residues 27–30 are cytoplasmic; sequence KRGA. The helical transmembrane segment at 31–51 threads the bilayer; it reads SVWWLLPAAASLALFVWLLTL. Topologically, residues 52 to 60 are periplasmic; it reads HPAASGRVY. The chain crosses the membrane as a helical span at residues 61–81; it reads AAYGGVYVCTALLWLRVVDGV. The Cytoplasmic segment spans residues 82 to 84; it reads RLT. A helical membrane pass occupies residues 85–105; that stretch reads VYDWCGALIALCGMLIIVVGW. At 106–108 the chain is on the periplasmic side; the sequence is GRT.

The protein belongs to the UPF0060 family.

The protein resides in the cell inner membrane. This is UPF0060 membrane protein YnfA from Salmonella agona (strain SL483).